Consider the following 353-residue polypeptide: Ion-translocating oxidoreductase complex subunit D (353 aa).

Helical transmembrane passes span 20–39 (LMRL…WYFF), 68–88 (PISH…LGIC), and 129–149 (VMLL…LTLV). Thr187 is modified (FMN phosphoryl threonine). The next 4 membrane-spanning stretches (helical) occupy residues 215 to 235 (LALG…FLIS), 238 to 258 (AIAW…SFIG), 267 to 287 (ASTM…FILT), and 300 to 320 (IIVG…GGYP).

This sequence belongs to the NqrB/RnfD family. As to quaternary structure, the complex is composed of six subunits: RnfA, RnfB, RnfC, RnfD, RnfE and RnfG. FMN is required as a cofactor.

It localises to the cell inner membrane. Part of a membrane-bound complex that couples electron transfer with translocation of ions across the membrane. The sequence is that of Ion-translocating oxidoreductase complex subunit D from Colwellia psychrerythraea (strain 34H / ATCC BAA-681) (Vibrio psychroerythus).